Reading from the N-terminus, the 228-residue chain is Response regulator MprA (228 aa).

The Response regulatory domain occupies 2–116 (RILVVDDDRA…ELLARMRALL (115 aa)). Asp-46 is modified (4-aspartylphosphate). Positions 127–225 (SVAMTFSDLT…VRGVGYVLRE (99 aa)) form a DNA-binding region, ompR/PhoB-type.

Phosphorylated and dephosphorylated by MprB.

It is found in the cytoplasm. In terms of biological role, member of the two-component regulatory system MprB/MprA which contributes to maintaining a balance among several systems involved in stress resistance and is required for establishment and maintenance of persistent infection in the host. Functions as a transcriptional regulator that recognizes a 19-bp nucleotide motif comprizing two loosely conserved 8-bp direct DNA-binding motif repeats separated by a 3-bp spacer region. In Mycobacterium avium (strain 104), this protein is Response regulator MprA (mprA).